Consider the following 441-residue polypeptide: Glutamyl-tRNA reductase (441 aa).

Substrate-binding positions include 49–52 (TCNR), serine 109, 114–116 (EDQ), and glutamine 120. Cysteine 50 (nucleophile) is an active-site residue. Residue 190–195 (GAGKMS) participates in NADP(+) binding.

It belongs to the glutamyl-tRNA reductase family. As to quaternary structure, homodimer.

The catalysed reaction is (S)-4-amino-5-oxopentanoate + tRNA(Glu) + NADP(+) = L-glutamyl-tRNA(Glu) + NADPH + H(+). It participates in porphyrin-containing compound metabolism; protoporphyrin-IX biosynthesis; 5-aminolevulinate from L-glutamyl-tRNA(Glu): step 1/2. In terms of biological role, catalyzes the NADPH-dependent reduction of glutamyl-tRNA(Glu) to glutamate 1-semialdehyde (GSA). The protein is Glutamyl-tRNA reductase of Moorella thermoacetica (strain ATCC 39073 / JCM 9320).